A 235-amino-acid polypeptide reads, in one-letter code: Small ribosomal subunit protein uS2 (235 aa).

This sequence belongs to the universal ribosomal protein uS2 family.

This is Small ribosomal subunit protein uS2 from Geobacillus kaustophilus (strain HTA426).